Here is a 323-residue protein sequence, read N- to C-terminus: Vertebrate ancient opsin (323 aa).

Residues 1 to 38 (MDTLRIAVNGVSYNEASEIYKPHADPFTGPITNLAPWN) lie on the Extracellular side of the membrane. A helical transmembrane segment spans residues 39-63 (FAVLATLMFVITSLSLFENFTVMLA). At 64–75 (TYKFKQLRQPLN) the chain is on the cytoplasmic side. A helical membrane pass occupies residues 76–100 (YIIVNLSLADFLVSLTGGTISFLTN). The Extracellular segment spans residues 101-115 (ARGYFFLGNWACVLE). C112 and C189 are oxidised to a cystine. A helical membrane pass occupies residues 116–135 (GFAVTYFGIVAMWSLAVLSF). Residues 136–154 (ERYFVICRPLGNVRLRGKH) are Cytoplasmic-facing. The helical transmembrane segment at 155–178 (AALGLLFVWTFSFIWTIPPVFGWC) threads the bilayer. At 179-202 (SYTVSKIGTTCEPNWYSNNIWNHT) the chain is on the extracellular side. An N-linked (GlcNAc...) asparagine glycan is attached at N200. A helical transmembrane segment spans residues 203 to 230 (YIITFFVTCFIMPLGMIIYCYGKLLQKL). The Cytoplasmic portion of the chain corresponds to 231–250 (RKVSHDRLGNAKKPERQVSR). Residues 251–274 (MVVVMIVAYLVGWTPYAAFSIIVT) traverse the membrane as a helical segment. Over 275-282 (ACPTIYLD) the chain is Extracellular. The chain crosses the membrane as a helical span at residues 283–307 (PRLAAAPAFFSKTAAVYNPVIYVFM). K294 is subject to N6-(retinylidene)lysine. The Cytoplasmic portion of the chain corresponds to 308 to 323 (NKQVSTQLNWGFWSRA).

Belongs to the G-protein coupled receptor 1 family. Opsin subfamily. In terms of processing, phosphorylated on some or all of the serine and threonine residues present in the C-terminal region.

The protein localises to the membrane. This chain is Vertebrate ancient opsin, found in Salmo salar (Atlantic salmon).